The primary structure comprises 180 residues: Cytokinin-beta-glucosidase 1 (180 aa).

In terms of biological role, hydrolyzes cytokinin glucosides thus liberating free cytokinins. The protein is Cytokinin-beta-glucosidase 1 (ROLC1) of Linaria vulgaris (Toadflax).